We begin with the raw amino-acid sequence, 451 residues long: Tubulin alpha chain (451 aa).

Gln11 contacts GTP. Lys40 is modified (N6-acetyllysine). The GTP site is built by Glu71, Gly144, Thr145, Thr179, Asn206, and Asn228. Mg(2+) is bound at residue Glu71. Glu254 is an active-site residue.

The protein belongs to the tubulin family. Dimer of alpha and beta chains. A typical microtubule is a hollow water-filled tube with an outer diameter of 25 nm and an inner diameter of 15 nM. Alpha-beta heterodimers associate head-to-tail to form protofilaments running lengthwise along the microtubule wall with the beta-tubulin subunit facing the microtubule plus end conferring a structural polarity. Microtubules usually have 13 protofilaments but different protofilament numbers can be found in some organisms and specialized cells. It depends on Mg(2+) as a cofactor. Post-translationally, undergoes a tyrosination/detyrosination cycle, the cyclic removal and re-addition of a C-terminal tyrosine residue by the enzymes tubulin tyrosine carboxypeptidase (TTCP) and tubulin tyrosine ligase (TTL), respectively. In terms of processing, acetylation of alpha chains at Lys-40 stabilizes microtubules and affects affinity and processivity of microtubule motors. This modification has a role in multiple cellular functions, ranging from cell motility, cell cycle progression or cell differentiation to intracellular trafficking and signaling.

It is found in the cytoplasm. It localises to the cytoskeleton. The catalysed reaction is GTP + H2O = GDP + phosphate + H(+). In terms of biological role, tubulin is the major constituent of microtubules, a cylinder consisting of laterally associated linear protofilaments composed of alpha- and beta-tubulin heterodimers. Microtubules grow by the addition of GTP-tubulin dimers to the microtubule end, where a stabilizing cap forms. Below the cap, tubulin dimers are in GDP-bound state, owing to GTPase activity of alpha-tubulin. The chain is Tubulin alpha chain (TUBA) from Chlorella vulgaris (Green alga).